Here is a 371-residue protein sequence, read N- to C-terminus: Transaldolase (371 aa).

An Isoglutamyl lysine isopeptide (Lys-Gln) (interchain with Q-Cter in protein Pup) cross-link involves residue Lys-132. The Schiff-base intermediate with substrate role is filled by Lys-142.

This sequence belongs to the transaldolase family. Type 2 subfamily.

The protein resides in the cytoplasm. It catalyses the reaction D-sedoheptulose 7-phosphate + D-glyceraldehyde 3-phosphate = D-erythrose 4-phosphate + beta-D-fructose 6-phosphate. Its pathway is carbohydrate degradation; pentose phosphate pathway; D-glyceraldehyde 3-phosphate and beta-D-fructose 6-phosphate from D-ribose 5-phosphate and D-xylulose 5-phosphate (non-oxidative stage): step 2/3. Functionally, transaldolase is important for the balance of metabolites in the pentose-phosphate pathway. This is Transaldolase (tal) from Mycolicibacterium smegmatis (strain ATCC 700084 / mc(2)155) (Mycobacterium smegmatis).